The following is a 188-amino-acid chain: Cytochrome b-245 chaperone 1 homolog (188 aa).

The chain crosses the membrane as a helical span at residues 20-42 (SIRSWSLLVGISSVGLAAAYYST).

Belongs to the CYBC1 family.

The protein localises to the endoplasmic reticulum membrane. In terms of biological role, functions as a chaperone necessary for a stable expression of the CYBA and CYBB subunits of the cytochrome b-245 heterodimer. The protein is Cytochrome b-245 chaperone 1 homolog (cybc1) of Xenopus tropicalis (Western clawed frog).